Here is a 1345-residue protein sequence, read N- to C-terminus: DNA-directed RNA polymerase subunit beta' (1345 aa).

Residues cysteine 60, cysteine 62, cysteine 75, and cysteine 78 each contribute to the Zn(2+) site. Residues aspartate 536, aspartate 538, and aspartate 540 each contribute to the Mg(2+) site. Cysteine 895, cysteine 974, cysteine 981, and cysteine 984 together coordinate Zn(2+). The interval 1325–1345 is disordered; sequence DDNDNPVDFGDEFRIDPDELK. Residues 1335–1345 show a composition bias toward basic and acidic residues; that stretch reads DEFRIDPDELK.

It belongs to the RNA polymerase beta' chain family. The RNAP catalytic core consists of 2 alpha, 1 beta, 1 beta' and 1 omega subunit. When a sigma factor is associated with the core the holoenzyme is formed, which can initiate transcription. The cofactor is Mg(2+). Requires Zn(2+) as cofactor.

It catalyses the reaction RNA(n) + a ribonucleoside 5'-triphosphate = RNA(n+1) + diphosphate. Functionally, DNA-dependent RNA polymerase catalyzes the transcription of DNA into RNA using the four ribonucleoside triphosphates as substrates. This chain is DNA-directed RNA polymerase subunit beta', found in Bifidobacterium animalis subsp. lactis (strain AD011).